Consider the following 116-residue polypeptide: Holo-[acyl-carrier-protein] synthase (116 aa).

Aspartate 8 and glutamate 59 together coordinate Mg(2+).

It belongs to the P-Pant transferase superfamily. AcpS family. Mg(2+) is required as a cofactor.

It localises to the cytoplasm. The catalysed reaction is apo-[ACP] + CoA = holo-[ACP] + adenosine 3',5'-bisphosphate + H(+). Functionally, transfers the 4'-phosphopantetheine moiety from coenzyme A to a Ser of acyl-carrier-protein. This Staphylococcus saprophyticus subsp. saprophyticus (strain ATCC 15305 / DSM 20229 / NCIMB 8711 / NCTC 7292 / S-41) protein is Holo-[acyl-carrier-protein] synthase.